The sequence spans 41 residues: Ornatin-A2 (41 aa).

Positions Arg-33–Asp-35 match the Cell attachment site motif.

It belongs to the ornatin family.

It localises to the secreted. Potent inhibitor of fibrinogen interaction with platelet receptors expressed on glycoprotein IIb-IIIa complex. May prevent blood from clotting during either feeding and/or storage of ingested blood. The protein is Ornatin-A2 of Placobdella ornata (Turtle leech).